We begin with the raw amino-acid sequence, 281 residues long: Small ribosomal subunit protein uS2 (281 aa).

The disordered stretch occupies residues 233–281 (NKAEGEAAEQPMAAWEKELLTNEAPAEASAEAAAPAAAEGETAEAPKAE). Residues 255-275 (EAPAEASAEAAAPAAAEGETA) are compositionally biased toward low complexity.

It belongs to the universal ribosomal protein uS2 family.

The chain is Small ribosomal subunit protein uS2 from Bifidobacterium longum (strain DJO10A).